The primary structure comprises 146 residues: Phospholipase A2 147 (146 aa).

An N-terminal signal peptide occupies residues 1–19; that stretch reads MYPAHLLVLLAVCVSLLGA. Positions 20-27 are excised as a propeptide; that stretch reads ASVPPQPL. 7 disulfide bridges follow: Cys-38/Cys-98, Cys-54/Cys-145, Cys-56/Cys-72, Cys-71/Cys-126, Cys-78/Cys-119, Cys-87/Cys-112, and Cys-105/Cys-117. 3 residues coordinate Ca(2+): Tyr-55, Gly-57, and Gly-59. His-75 is an active-site residue. Asp-76 contributes to the Ca(2+) binding site. Asp-120 is a catalytic residue.

Belongs to the phospholipase A2 family. Group I subfamily. D49 sub-subfamily. The cofactor is Ca(2+). In terms of tissue distribution, expressed by the venom gland.

Its subcellular location is the secreted. The enzyme catalyses a 1,2-diacyl-sn-glycero-3-phosphocholine + H2O = a 1-acyl-sn-glycero-3-phosphocholine + a fatty acid + H(+). In terms of biological role, snake venom phospholipase A2 (PLA2) that inhibits collagen-induced platelet aggregation. PLA2 catalyzes the calcium-dependent hydrolysis of the 2-acyl groups in 3-sn-phosphoglycerides. The chain is Phospholipase A2 147 from Drysdalia coronoides (White-lipped snake).